Here is a 153-residue protein sequence, read N- to C-terminus: Large ribosomal subunit protein uL30 (153 aa).

Belongs to the universal ribosomal protein uL30 family. Part of the 50S ribosomal subunit.

This Methanosarcina acetivorans (strain ATCC 35395 / DSM 2834 / JCM 12185 / C2A) protein is Large ribosomal subunit protein uL30.